The primary structure comprises 782 residues: Zinc finger protein 786 (782 aa).

In terms of domain architecture, KRAB spans 9–80; it reads LTFEDVAIYF…WRESQKSGNI (72 aa). The segment at 141-164 is disordered; the sequence is PQRHDARAPPPLACGPSESTLKEG. A C2H2-type 1; degenerate zinc finger spans residues 192–209; sequence CGESCWENNHLVMHQRGH. The C2H2-type 2 zinc-finger motif lies at 240–262; that stretch reads FRCGVCGKSFRRKLCLLRHLAAH. Positions 285-364 are disordered; that stretch reads SHRLPQQGEK…EGDTEALQHG (80 aa). A C2H2-type 3; degenerate zinc finger spans residues 369–391; sequence CSCSECGERSPMSARLASPCRAH. 3 C2H2-type zinc fingers span residues 397 to 419, 425 to 447, and 453 to 475; these read FQCAHCTKRFRLRRLLQVHQHAH, FSCRKCGKGFAKQCKLTEHIRVH, and FRCAKCGRNFRQRGQLLRHQRLH. The C2H2-type 7; degenerate zinc finger occupies 481–503; it reads FQCPECGLSFRLESMLRAHRLRH. 9 consecutive C2H2-type zinc fingers follow at residues 509–531, 537–559, 565–587, 593–615, 621–643, 649–670, 676–698, 704–726, and 732–754; these read FSCSECGRGFTHQCKLREHLRVH, FQCLKCDKRFRLKGILKAHQHTH, FSCGECGKGFTRQSKLTEHLRVH, FQCPECNRSFRLKGQLLSHQRLH, FQCPECDKRYRVKADMKAHQLLH, FSCECGKGFVKHSKLIEHIRTH, FQCPKCDKSFRLKAQLLSHQGLH, FHCPECDKNFRERGHMLRHQRIH, and FACGDCGKGFIYKSKLAEHIRVH.

The protein belongs to the krueppel C2H2-type zinc-finger protein family.

Its subcellular location is the nucleus. May be involved in transcriptional regulation. The protein is Zinc finger protein 786 (ZNF786) of Homo sapiens (Human).